The chain runs to 432 residues: Homogentisate 1,2-dioxygenase (432 aa).

Histidine 333, glutamate 339, and histidine 369 together coordinate Fe cation.

The protein belongs to the homogentisate dioxygenase family. Fe cation serves as cofactor.

It carries out the reaction homogentisate + O2 = 4-maleylacetoacetate + H(+). The protein operates within amino-acid degradation; L-phenylalanine degradation; acetoacetate and fumarate from L-phenylalanine: step 4/6. In Dictyostelium discoideum (Social amoeba), this protein is Homogentisate 1,2-dioxygenase (hgd).